Reading from the N-terminus, the 24-residue chain is Small ribosomal subunit protein uS19 (24 aa).

The disordered stretch occupies residues 1 to 24; the sequence is KLGEFSPTRTYRGHNKKDKKMQKK. Over residues 11–24 the composition is skewed to basic residues; that stretch reads YRGHNKKDKKMQKK.

It belongs to the universal ribosomal protein uS19 family.

In terms of biological role, protein S19 forms a complex with S13 that binds strongly to the 16S ribosomal RNA. The sequence is that of Small ribosomal subunit protein uS19 from Phytoplasma sp. (strain STRAWB2).